Reading from the N-terminus, the 352-residue chain is MQYWIPKALAVSVLVSLSGCSVFTSDAHNERNYRAHEPVKAPASLSQPAQDPVYKMDVGQYDNNPEATNYRPPAQVLTIAKGSWVEEADKQARIYFDKNDGIEDLDVFIWDSIQAVLADNNISATQLDKTQGTLVTDWYAIVKPEESWLWGNDESVDLERFKFTIEEKEHQRTASLTAELIDFKGDKPLTDLLKQQLEVRALNQVVSEFDYRYRQLEVDMRKRQGIISLELGFDNKGNAALVTEQAYDTVFDRFSGFLERLSFTIVEINQETGLITADYAKVESSVWDSIWGDEPTELPIDEGQYQILVSKTKQGGTSLTWMDDKGETLEPGTMNGLQQALEAALIKRGIKI.

A signal peptide spans methionine 1–glycine 19. Cysteine 20 carries N-palmitoyl cysteine lipidation. A lipid anchor (S-diacylglycerol cysteine) is attached at cysteine 20.

It belongs to the BamC family. Part of the Bam complex.

Its subcellular location is the cell outer membrane. Part of the outer membrane protein assembly complex, which is involved in assembly and insertion of beta-barrel proteins into the outer membrane. This is Outer membrane protein assembly factor BamC from Pseudoalteromonas sp. (strain SM9913).